Reading from the N-terminus, the 609-residue chain is UvrABC system protein C (609 aa).

Residues 19–97 (ASPGCYLWKS…IKKHNPRFNV (79 aa)) form the GIY-YIG domain. The 36-residue stretch at 208-243 (ESLVSDLNIKMSNASERLDFEKAARYRDMLQRIQNF) folds into the UVR domain.

This sequence belongs to the UvrC family. As to quaternary structure, interacts with UvrB in an incision complex.

The protein resides in the cytoplasm. In terms of biological role, the UvrABC repair system catalyzes the recognition and processing of DNA lesions. UvrC both incises the 5' and 3' sides of the lesion. The N-terminal half is responsible for the 3' incision and the C-terminal half is responsible for the 5' incision. This is UvrABC system protein C from Leptospira interrogans serogroup Icterohaemorrhagiae serovar copenhageni (strain Fiocruz L1-130).